The chain runs to 138 residues: Large ribosomal subunit protein uL16 (138 aa).

Positions 1–15 (MLSPKKVKYRKKQRG) are enriched in basic residues. A disordered region spans residues 1–20 (MLSPKKVKYRKKQRGRLSGE).

This sequence belongs to the universal ribosomal protein uL16 family. In terms of assembly, part of the 50S ribosomal subunit.

Its function is as follows. Binds 23S rRNA and is also seen to make contacts with the A and possibly P site tRNAs. This Borrelia hermsii (strain HS1 / DAH) protein is Large ribosomal subunit protein uL16.